The primary structure comprises 938 residues: Isoleucine--tRNA ligase (938 aa).

Positions 61-71 (PYANGDIHLGT) match the 'HIGH' region motif. Glutamate 559 serves as a coordination point for L-isoleucyl-5'-AMP. Positions 601 to 605 (KMSKS) match the 'KMSKS' region motif. Position 604 (lysine 604) interacts with ATP. Positions 904, 907, 923, and 926 each coordinate Zn(2+).

The protein belongs to the class-I aminoacyl-tRNA synthetase family. IleS type 1 subfamily. Monomer. Requires Zn(2+) as cofactor.

The protein resides in the cytoplasm. It carries out the reaction tRNA(Ile) + L-isoleucine + ATP = L-isoleucyl-tRNA(Ile) + AMP + diphosphate. Catalyzes the attachment of isoleucine to tRNA(Ile). As IleRS can inadvertently accommodate and process structurally similar amino acids such as valine, to avoid such errors it has two additional distinct tRNA(Ile)-dependent editing activities. One activity is designated as 'pretransfer' editing and involves the hydrolysis of activated Val-AMP. The other activity is designated 'posttransfer' editing and involves deacylation of mischarged Val-tRNA(Ile). This Symbiobacterium thermophilum (strain DSM 24528 / JCM 14929 / IAM 14863 / T) protein is Isoleucine--tRNA ligase.